Here is a 485-residue protein sequence, read N- to C-terminus: Glutamate--tRNA ligase (485 aa).

Positions 11 to 21 (PSPTGYMHVGN) match the 'HIGH' region motif. Zn(2+) contacts are provided by Cys-108, Cys-110, Cys-135, and Asp-137. A 'KMSKS' region motif is present at residues 252 to 256 (KLSKR). Position 255 (Lys-255) interacts with ATP.

It belongs to the class-I aminoacyl-tRNA synthetase family. Glutamate--tRNA ligase type 1 subfamily. Monomer. Requires Zn(2+) as cofactor.

Its subcellular location is the cytoplasm. It catalyses the reaction tRNA(Glu) + L-glutamate + ATP = L-glutamyl-tRNA(Glu) + AMP + diphosphate. Catalyzes the attachment of glutamate to tRNA(Glu) in a two-step reaction: glutamate is first activated by ATP to form Glu-AMP and then transferred to the acceptor end of tRNA(Glu). The protein is Glutamate--tRNA ligase of Clostridium botulinum (strain ATCC 19397 / Type A).